A 502-amino-acid polypeptide reads, in one-letter code: Uric acid degradation bifunctional protein (502 aa).

An OHCU decarboxylase region spans residues 1 to 178 (MMRLKQLNEM…NSMTKHKERV (178 aa)). His68 acts as the Proton donor; for OHCU decarboxylase activity in catalysis. Residues Pro69, 81 to 85 (SQEEQ), and 116 to 120 (FVMAV) contribute to the 5-hydroxy-2-oxo-4-ureido-2,5-dihydro-1H-imidazole-5-carboxylate site. The interval 179–502 (MYYGKGDVFA…DEPDHKGALK (324 aa)) is urate oxidase. The active-site Charge relay system; for urate oxidase activity is Lys183. Residue Lys194 is the Charge relay system of the active site. Catalysis depends on Thr243, which acts as the Charge relay system; for urate oxidase activity. 7 residues coordinate urate: Thr243, Asp244, Phe354, Arg371, Ile419, Gln420, and Asn446.

The protein in the N-terminal section; belongs to the OHCU decarboxylase family. This sequence in the C-terminal section; belongs to the uricase family.

It catalyses the reaction 5-hydroxy-2-oxo-4-ureido-2,5-dihydro-1H-imidazole-5-carboxylate + H(+) = (S)-allantoin + CO2. The catalysed reaction is urate + O2 + H2O = 5-hydroxyisourate + H2O2. It functions in the pathway purine metabolism; urate degradation; (S)-allantoin from urate: step 1/3. Its pathway is purine metabolism; urate degradation; (S)-allantoin from urate: step 3/3. Catalyzes two steps in the degradation of uric acid, i.e. the oxidation of uric acid to 5-hydroxyisourate (HIU) and the stereoselective decarboxylation of 2-oxo-4-hydroxy-4-carboxy-5-ureidoimidazoline (OHCU) to (S)-allantoin. In Bacillus sp. (strain TB-90), this protein is Uric acid degradation bifunctional protein (uao).